The primary structure comprises 219 residues: Ribose-5-phosphate isomerase A (219 aa).

Residues 28-31, 81-84, and 94-97 contribute to the substrate site; these read TGST, DGAD, and KGGG. Glu103 (proton acceptor) is an active-site residue. Lys121 serves as a coordination point for substrate.

This sequence belongs to the ribose 5-phosphate isomerase family. In terms of assembly, homodimer.

It carries out the reaction aldehydo-D-ribose 5-phosphate = D-ribulose 5-phosphate. The protein operates within carbohydrate degradation; pentose phosphate pathway; D-ribose 5-phosphate from D-ribulose 5-phosphate (non-oxidative stage): step 1/1. Catalyzes the reversible conversion of ribose-5-phosphate to ribulose 5-phosphate. This chain is Ribose-5-phosphate isomerase A, found in Pectobacterium carotovorum subsp. carotovorum (strain PC1).